Here is a 522-residue protein sequence, read N- to C-terminus: Protein nucleotidyltransferase YdiU (522 aa).

ATP contacts are provided by G109, G111, R112, K132, D144, G145, R195, and R202. D271 acts as the Proton acceptor in catalysis. The Mg(2+) site is built by N272 and D281. Residue D281 coordinates ATP.

Belongs to the SELO family. Mg(2+) serves as cofactor. Mn(2+) is required as a cofactor.

It catalyses the reaction L-seryl-[protein] + ATP = 3-O-(5'-adenylyl)-L-seryl-[protein] + diphosphate. The enzyme catalyses L-threonyl-[protein] + ATP = 3-O-(5'-adenylyl)-L-threonyl-[protein] + diphosphate. It carries out the reaction L-tyrosyl-[protein] + ATP = O-(5'-adenylyl)-L-tyrosyl-[protein] + diphosphate. The catalysed reaction is L-histidyl-[protein] + UTP = N(tele)-(5'-uridylyl)-L-histidyl-[protein] + diphosphate. It catalyses the reaction L-seryl-[protein] + UTP = O-(5'-uridylyl)-L-seryl-[protein] + diphosphate. The enzyme catalyses L-tyrosyl-[protein] + UTP = O-(5'-uridylyl)-L-tyrosyl-[protein] + diphosphate. Nucleotidyltransferase involved in the post-translational modification of proteins. It can catalyze the addition of adenosine monophosphate (AMP) or uridine monophosphate (UMP) to a protein, resulting in modifications known as AMPylation and UMPylation. The chain is Protein nucleotidyltransferase YdiU from Burkholderia orbicola (strain MC0-3).